A 194-amino-acid polypeptide reads, in one-letter code: Holliday junction branch migration complex subunit RuvA (194 aa).

Positions 1 to 64 (MIGRLRGVLT…DDSAALYGFL (64 aa)) are domain I. The domain II stretch occupies residues 65–140 (SESERRLFRH…RAADFNNGIS (76 aa)). Residues 140-144 (STSGK) form a flexible linker region. The tract at residues 145-194 (LNLDTVSEAALALQQLGYKPAEAARMARDAGTESDDVATVIKKALQAALC) is domain III.

This sequence belongs to the RuvA family. As to quaternary structure, homotetramer. Forms an RuvA(8)-RuvB(12)-Holliday junction (HJ) complex. HJ DNA is sandwiched between 2 RuvA tetramers; dsDNA enters through RuvA and exits via RuvB. An RuvB hexamer assembles on each DNA strand where it exits the tetramer. Each RuvB hexamer is contacted by two RuvA subunits (via domain III) on 2 adjacent RuvB subunits; this complex drives branch migration. In the full resolvosome a probable DNA-RuvA(4)-RuvB(12)-RuvC(2) complex forms which resolves the HJ.

The protein localises to the cytoplasm. Functionally, the RuvA-RuvB-RuvC complex processes Holliday junction (HJ) DNA during genetic recombination and DNA repair, while the RuvA-RuvB complex plays an important role in the rescue of blocked DNA replication forks via replication fork reversal (RFR). RuvA specifically binds to HJ cruciform DNA, conferring on it an open structure. The RuvB hexamer acts as an ATP-dependent pump, pulling dsDNA into and through the RuvAB complex. HJ branch migration allows RuvC to scan DNA until it finds its consensus sequence, where it cleaves and resolves the cruciform DNA. The polypeptide is Holliday junction branch migration complex subunit RuvA (Xylella fastidiosa (strain M12)).